Consider the following 423-residue polypeptide: Serine--tRNA ligase (423 aa).

Positions 1 to 12 (MIDLKALRENPD) are enriched in basic and acidic residues. Positions 1-26 (MIDLKALRENPDVGRASQRSRGEDPE) are disordered. An L-serine-binding site is contributed by 230-232 (TSE). Residues 261–263 (RRE) and valine 277 each bind ATP. Glutamate 284 lines the L-serine pocket. Residue 348 to 351 (ELTS) participates in ATP binding. L-serine is bound at residue threonine 383.

It belongs to the class-II aminoacyl-tRNA synthetase family. Type-1 seryl-tRNA synthetase subfamily. In terms of assembly, homodimer. The tRNA molecule binds across the dimer.

It is found in the cytoplasm. The catalysed reaction is tRNA(Ser) + L-serine + ATP = L-seryl-tRNA(Ser) + AMP + diphosphate + H(+). The enzyme catalyses tRNA(Sec) + L-serine + ATP = L-seryl-tRNA(Sec) + AMP + diphosphate + H(+). It participates in aminoacyl-tRNA biosynthesis; selenocysteinyl-tRNA(Sec) biosynthesis; L-seryl-tRNA(Sec) from L-serine and tRNA(Sec): step 1/1. Functionally, catalyzes the attachment of serine to tRNA(Ser). Is also able to aminoacylate tRNA(Sec) with serine, to form the misacylated tRNA L-seryl-tRNA(Sec), which will be further converted into selenocysteinyl-tRNA(Sec). This chain is Serine--tRNA ligase, found in Beutenbergia cavernae (strain ATCC BAA-8 / DSM 12333 / CCUG 43141 / JCM 11478 / NBRC 16432 / NCIMB 13614 / HKI 0122).